Here is a 130-residue protein sequence, read N- to C-terminus: RutC family protein HI_0719 (130 aa).

Cys-109 is a catalytic residue.

This sequence belongs to the RutC family. Homotrimer.

In Haemophilus influenzae (strain ATCC 51907 / DSM 11121 / KW20 / Rd), this protein is RutC family protein HI_0719.